The following is a 295-amino-acid chain: Glycine N-acyltransferase-like protein Keg1 (295 aa).

Residue K41 is modified to N6-acetyllysine; alternate. An N6-succinyllysine; alternate modification is found at K41. K43 carries the N6-acetyllysine modification. An N6-acetyllysine; alternate modification is found at K48. At K48 the chain carries N6-succinyllysine; alternate. 2 positions are modified to N6-acetyllysine: K80 and K83. An N6-acetyllysine; alternate mark is found at K124, K128, and K140. K124, K128, and K140 each carry N6-succinyllysine; alternate. Position 150 is an N6-acetyllysine (K150). Residue K255 is modified to N6-acetyllysine; alternate. N6-succinyllysine; alternate is present on K255.

This sequence belongs to the glycine N-acyltransferase family. In terms of assembly, binds to microtubules. Specifically expressed in kidney and liver. Up-regulated in the regenerating liver as well as in hepatocellular carcinoma.

The protein localises to the cytoplasm. Its subcellular location is the cytoskeleton. It is found in the microtubule organizing center. The protein resides in the centrosome. It catalyses the reaction an acyl-CoA + glycine = an N-acylglycine + CoA + H(+). Functionally, acyltransferase which transfers the acyl group to the N-terminus of glycine. Can conjugate a multitude of substrates to form a variety of N-acylglycines. The polypeptide is Glycine N-acyltransferase-like protein Keg1 (Keg1) (Rattus norvegicus (Rat)).